The following is a 355-amino-acid chain: IGF-like family receptor 1 (355 aa).

A signal peptide spans M1–A22. At S23–P163 the chain is on the extracellular side. The disordered stretch occupies residues K120–W147. Positions A132–S144 are enriched in low complexity. A helical membrane pass occupies residues L164–L184. At W185–A355 the chain is on the cytoplasmic side.

Its subcellular location is the cell membrane. In terms of biological role, probable cell membrane receptor for the IGF-like family proteins. Binds IGFL1 and IGFL3 with a higher affinity. May also bind IGFL2. The chain is IGF-like family receptor 1 (IGFLR1) from Homo sapiens (Human).